The primary structure comprises 401 residues: Bifunctional sugar-1-phosphate nucleotidylyltransferase/acetyltransferase (401 aa).

The interval 1–220 (MKAFILAAGS…KPWNIIDVNK (220 aa)) is nucleotidylyltransferase. A ribonucleoside 5'-triphosphate-binding positions include 8-13 (AGSGER), Gln-73, and Gly-79. Residues Thr-80, Tyr-97, Gly-131, Glu-146, and Asn-157 each contribute to the N-acetyl-alpha-D-glucosamine 1-phosphate site. Residues 236–401 (EDNVKIKGKV…DVGYGEFFKV (166 aa)) are acetyltransferase.

This sequence in the N-terminal section; belongs to the N-acetylglucosamine-1-phosphate uridyltransferase family. In the C-terminal section; belongs to the transferase hexapeptide repeat family. As to quaternary structure, homotrimer. Co(2+) is required as a cofactor. Requires Mn(2+) as cofactor.

It carries out the reaction dTTP + alpha-D-glucose 1-phosphate + H(+) = dTDP-alpha-D-glucose + diphosphate. The enzyme catalyses alpha-D-glucose 1-phosphate + UTP + H(+) = UDP-alpha-D-glucose + diphosphate. The catalysed reaction is N-acetyl-alpha-D-galactosamine 1-phosphate + UTP + H(+) = UDP-N-acetyl-alpha-D-galactosamine + diphosphate. It catalyses the reaction N-acetyl-alpha-D-glucosamine 1-phosphate + UTP + H(+) = UDP-N-acetyl-alpha-D-glucosamine + diphosphate. It carries out the reaction alpha-D-galactosamine 1-phosphate + acetyl-CoA = N-acetyl-alpha-D-galactosamine 1-phosphate + CoA + H(+). The enzyme catalyses alpha-D-glucosamine 1-phosphate + acetyl-CoA = N-acetyl-alpha-D-glucosamine 1-phosphate + CoA + H(+). The protein operates within nucleotide-sugar biosynthesis; UDP-N-acetyl-alpha-D-glucosamine biosynthesis; N-acetyl-alpha-D-glucosamine 1-phosphate from alpha-D-glucosamine 6-phosphate (route II): step 2/2. It participates in nucleotide-sugar biosynthesis; UDP-N-acetyl-alpha-D-glucosamine biosynthesis; UDP-N-acetyl-alpha-D-glucosamine from N-acetyl-alpha-D-glucosamine 1-phosphate: step 1/1. Its activity is regulated as follows. GlcN-1-P acetyltransferase activity is inhibited by divalent cations. GalN-1-P acetyltransferase activity is enhanced by Co(2+), Mg(2+) and Ca(2+), but inhibited by Zn(2+) or Mn(2+). Functionally, bifunctional enzyme involved in the synthesis of UDP-N-acetylglucosamine (UDP-GlcNAc) and UDP-N-acetylgalactosamine (UDP-GalNAc). It has multiple amino-sugar-1-phosphate acetyltransferase activities, including glucosamine-1-phosphate (GlcN-1-P) acetyltransferase and galactosamine-1-phosphate (GalN-1-P) acetyltransferase activities, and multiple sugar-1-phosphate nucleotidylyltransferase activities, including N-acetylglucosamine-1-phosphate (GlcNAc-1-P) uridyltransferase and N-acetylgalactosamine-1-phosphate (GalNAc-1-P) uridyltransferase activities. Also catalyzes the formation of dTDP-glucose from dTTP and glucose-1-phosphate (Glc-1-P), and the reverse reaction, which produces dTTP from dTDP-glucose and diphosphate. Can also catalyze the formation of UDP-glucose from UTP and glucose-1-phosphate. This Sulfurisphaera tokodaii (strain DSM 16993 / JCM 10545 / NBRC 100140 / 7) (Sulfolobus tokodaii) protein is Bifunctional sugar-1-phosphate nucleotidylyltransferase/acetyltransferase.